Reading from the N-terminus, the 291-residue chain is Ajmaline N-methyltransferase (291 aa).

The segment at Met71–Gly80 is SAM motif I. The Vacuolar targeting signal signature appears at Asp133–Val139. The interval Gly134–Ile142 is SAM motif II. The interval Val161 to Ile170 is SAM motif III.

The protein belongs to the class I-like SAM-binding methyltransferase superfamily. gTMT family. In terms of assembly, homodimer. In terms of tissue distribution, mainly expressed in roots, but barely detectable in stems and flowers.

Its subcellular location is the vacuole membrane. It carries out the reaction ajmaline + S-adenosyl-L-methionine = 4-methylajmaline + S-adenosyl-L-homocysteine + H(+). It catalyses the reaction norajmaline + S-adenosyl-L-methionine = 4-methylnorajmaline + S-adenosyl-L-homocysteine + H(+). It participates in alkaloid biosynthesis; ajmaline biosynthesis. Functionally, N-methyltransferase involved in the biosynthesis of ajmaline-type monoterpenoid indole alkaloids (MIAs) natural products, important plant-derived pharmaceuticals used in the therapy of heart disorders. Catalyzes the indole N-methylation of ajmaline to produce 4-methylajmaline. Also able, with a lower efficiency, to mediates the conversion of norajmaline to 4-methylnorajmaline. This is Ajmaline N-methyltransferase from Rauvolfia serpentina (Serpentine wood).